The primary structure comprises 433 residues: Glutamate--tRNA ligase 1 (433 aa).

A 'HIGH' region motif is present at residues 7–17; it reads PSPTGLIHLGN. Positions 230–234 match the 'KMSKS' region motif; the sequence is KMSKR. Residue Lys233 participates in ATP binding.

It belongs to the class-I aminoacyl-tRNA synthetase family. Glutamate--tRNA ligase type 1 subfamily. As to quaternary structure, monomer.

The protein resides in the cytoplasm. It catalyses the reaction tRNA(Glu) + L-glutamate + ATP = L-glutamyl-tRNA(Glu) + AMP + diphosphate. In terms of biological role, catalyzes the attachment of glutamate to tRNA(Glu) in a two-step reaction: glutamate is first activated by ATP to form Glu-AMP and then transferred to the acceptor end of tRNA(Glu). In Neorickettsia sennetsu (strain ATCC VR-367 / Miyayama) (Ehrlichia sennetsu), this protein is Glutamate--tRNA ligase 1.